The chain runs to 201 residues: Potassium-transporting ATPase KdpC subunit (201 aa).

A helical transmembrane segment spans residues 7-29 (PALVLLTALTAITGLAYPLAMTG).

This sequence belongs to the KdpC family. As to quaternary structure, the system is composed of three essential subunits: KdpA, KdpB and KdpC.

It localises to the cell inner membrane. Functionally, part of the high-affinity ATP-driven potassium transport (or Kdp) system, which catalyzes the hydrolysis of ATP coupled with the electrogenic transport of potassium into the cytoplasm. This subunit acts as a catalytic chaperone that increases the ATP-binding affinity of the ATP-hydrolyzing subunit KdpB by the formation of a transient KdpB/KdpC/ATP ternary complex. The protein is Potassium-transporting ATPase KdpC subunit of Methylobacterium radiotolerans (strain ATCC 27329 / DSM 1819 / JCM 2831 / NBRC 15690 / NCIMB 10815 / 0-1).